Here is a 478-residue protein sequence, read N- to C-terminus: Flotillin-like protein 1 (478 aa).

Residue Cys35 is the site of S-palmitoyl cysteine attachment. A coiled-coil region spans residues 235-277 (ENQREAEVAEANSELAKKKAAWTMAAQVAELEAAKAVALREAE).

It belongs to the band 7/mec-2 family. Flotillin subfamily. In terms of processing, may be palmitoylated. In terms of tissue distribution, expressed in all plant organs. Primarily expressed in vascular tissues. No change in spatial expression in root upon inoculation. Expression limited to the nodule vascular tissue.

The protein localises to the cell membrane. Its subcellular location is the membrane. The protein resides in the caveola. In terms of biological role, may act as a scaffolding protein within caveolar membranes, functionally participating in formation of caveolae or caveolae-like vesicles. May be involved in nodule formation. The polypeptide is Flotillin-like protein 1 (FLOT1) (Medicago truncatula (Barrel medic)).